Consider the following 471-residue polypeptide: Putative multidrug resistance protein MdtD (471 aa).

Residues 1–11 lie on the Periplasmic side of the membrane; sequence MTELPDSTRWQ. The chain crosses the membrane as a helical span at residues 12 to 32; the sequence is LWIVAFGFFMQSLDTTIVNTA. The Cytoplasmic segment spans residues 33–48; sequence LPSMAQSLGESPLHMH. The chain crosses the membrane as a helical span at residues 49 to 69; sequence MVIVSYVLTVAVMLPASGWLA. The Periplasmic portion of the chain corresponds to 70–76; sequence DKVGVRN. The chain crosses the membrane as a helical span at residues 77–97; that stretch reads IFFTAIVLFTLGSLFCALSGT. The Cytoplasmic segment spans residues 98–101; that stretch reads LNEL. The chain crosses the membrane as a helical span at residues 102–124; it reads LLARALQGVGGAMMVPVGRLTVM. Topologically, residues 125 to 137 are periplasmic; that stretch reads KIVPREQYMAAMT. A helical transmembrane segment spans residues 138 to 158; sequence FVTLPGQVGPLLGPALGGLLV. Topologically, residues 159–164 are cytoplasmic; the sequence is EYASWH. Residues 165–185 form a helical membrane-spanning segment; the sequence is WIFLINIPVGIIGAIATLLLM. Topologically, residues 186–196 are periplasmic; that stretch reads PNYTMQTRRFD. A helical membrane pass occupies residues 197–217; sequence LSGFLLLAVGMAVLTLALDGS. The Cytoplasmic segment spans residues 218–224; sequence KGTGLSP. The chain crosses the membrane as a helical span at residues 225-245; sequence LAIAGLVAVGVVALVLYLLHA. Topologically, residues 246 to 262 are periplasmic; that stretch reads RNNNRALFSLKLFRTRT. The chain crosses the membrane as a helical span at residues 263–283; that stretch reads FSLGLAGSFAGRIGSGMLPFM. The Cytoplasmic portion of the chain corresponds to 284 to 285; that stretch reads TP. Residues 286 to 306 form a helical membrane-spanning segment; the sequence is VFLQIGLGFSPFHAGLMMIPM. Residues 307 to 341 lie on the Periplasmic side of the membrane; it reads VLGSMGMKRIVVQVVNRFGYRRVLVATTLGLSLIT. Residues 342–362 form a helical membrane-spanning segment; that stretch reads LLFMTTALLGWYYVLPFVLFL. Residues 363–395 lie on the Cytoplasmic side of the membrane; the sequence is QGMVNSTRFSSMNTLTLKDLPDNLASSGNSLLS. Residues 396-416 traverse the membrane as a helical segment; the sequence is MIMQLSMSIGVTIAGLLLGLF. Residues 417–430 are Periplasmic-facing; that stretch reads GSQHVSVDSGTTQT. Residues 431 to 451 traverse the membrane as a helical segment; it reads VFMYTWLSMAFIIALPAFIFA. Residues 452–471 are Cytoplasmic-facing; sequence RVPNDTHQNVAISRRKRSAQ.

The protein belongs to the major facilitator superfamily. TCR/Tet family.

The protein localises to the cell inner membrane. This Shigella sonnei (strain Ss046) protein is Putative multidrug resistance protein MdtD.